A 324-amino-acid chain; its full sequence is UDP-galactose transporter homolog 1 (324 aa).

Helical transmembrane passes span 7-27 (LVIA…AQEP) and 42-62 (HSSF…LCYL). Asn97 carries an N-linked (GlcNAc...) asparagine glycan. 7 helical membrane passes run 106–126 (VGYM…HVLV), 135–155 (KALV…GGAE), 161–181 (ASLY…LTNA), 199–219 (HLMV…LVLF), 237–257 (ILTY…FVFF), 265–285 (LVLA…SIVV), and 290–310 (VRPV…WETV).

The protein belongs to the nucleotide-sugar transporter family. SLC35B subfamily.

It is found in the endoplasmic reticulum membrane. Its function is as follows. May be involved in specific transport of UDP-Gal from the cytosol to the Golgi lumen. Involved in the maintenance of optimal conditions for the folding of secretory pathway proteins in the endoplasmic reticulum. The chain is UDP-galactose transporter homolog 1 (HUT1) from Eremothecium gossypii (strain ATCC 10895 / CBS 109.51 / FGSC 9923 / NRRL Y-1056) (Yeast).